We begin with the raw amino-acid sequence, 260 residues long: ARL14 effector protein (260 aa).

Methionine 1 carries the post-translational modification N-acetylmethionine. Lysine 177 is covalently cross-linked (Glycyl lysine isopeptide (Lys-Gly) (interchain with G-Cter in SUMO2)). The residue at position 183 (serine 183) is a Phosphoserine.

As to quaternary structure, interacts with ARL14 and MYO1E.

The protein resides in the cytoplasm. In terms of biological role, through its interaction with ARL14 and MYO1E, may connect MHC class II-containing cytoplasmic vesicles to the actin network and hence controls the movement of these vesicles along the actin cytoskeleton in dendritic cells. The polypeptide is ARL14 effector protein (ARL14EP) (Bos taurus (Bovine)).